The sequence spans 314 residues: tRNA-cytidine(32) 2-sulfurtransferase (314 aa).

Positions 49 to 54 (SGGKDS) match the PP-loop motif motif. [4Fe-4S] cluster contacts are provided by cysteine 124, cysteine 127, and cysteine 215.

It belongs to the TtcA family. Homodimer. The cofactor is Mg(2+). Requires [4Fe-4S] cluster as cofactor.

The protein resides in the cytoplasm. The enzyme catalyses cytidine(32) in tRNA + S-sulfanyl-L-cysteinyl-[cysteine desulfurase] + AH2 + ATP = 2-thiocytidine(32) in tRNA + L-cysteinyl-[cysteine desulfurase] + A + AMP + diphosphate + H(+). Its pathway is tRNA modification. In terms of biological role, catalyzes the ATP-dependent 2-thiolation of cytidine in position 32 of tRNA, to form 2-thiocytidine (s(2)C32). The sulfur atoms are provided by the cysteine/cysteine desulfurase (IscS) system. The polypeptide is tRNA-cytidine(32) 2-sulfurtransferase (Pasteurella multocida (strain Pm70)).